The following is a 1347-amino-acid chain: MQPNQLKRPSLNHRFEPYTLKHLTICKRCEKEIIGVSNSAQICYSCKNIYHTRCCKEIETKKLELICLGPPKKIKTVWKIALIPSLFKSLFSKSKVIVNYSQQLINEKTFTLEAIKIWVDVMRVDNDRYIQITKYYDIFDEEVFNYIINMIIEKDINLPMVNIEFPVDLHSSVQQNQYINDQAVSQEQKQQQQQLQQQLILQQQQQQQLQQQQLNESYDNSTINNLNYSNDISNAFSPRSVFSALELSSNAQVMNALELSVPFNEDDNNDDSTLSASTYNRRNSNKNKNSNKNNTSSSSSAPASASSSKHSNLNESFSSSTTAAAIVNNIDNSNNSNNLAALSPRSTASTTTTTTTTTTTTSPKSNNHHHHQHHHQNSKSRKPSTIIINKKKIKSPKNKSSKRYMLTEQYKWSTQMIGLQILYRILFNEKNMIHFLNDKFMAPLAVLYPILINRLKAISLGSDNNNNNNNNNNNNNNNSNNNNNNNNEDFKLLSINCKLLISILNRMLDFETLIPLFFTNKVIESIAKVNSDRESLRGKLSKDEFEVMDRVVLLLGKYFHLEPYHSLIERRPEWIDMIINYSVEHKVGILHHEITRNEVKINVEIYDSPLCTVYSGVYNGMDVAIKEFSQDGMGFDWVSFYKEITIVSASQHPKVIKCYGAHTKNTNKPFIVTELCSRGTISNALNQIRKTTGQPPAIPLIVHMAIDAAQSLEFIHSKNIIHRDVKGNNFLVNENWEVKLIDFGVSRFVEARLGYTIVGTPNYMACELFNGQPYHQPADVFSFGVVLWEMFTQDTPYKNLTRIEQALFVQSGGRPTIPPTVPTTIANLIESCWVQTPHLRPTFTEILKVFYSLLTPPPDNEHLVPVVTRLFNSSIIQLKILKYLDTNTLLNCGLASRQLRYNLYNGISMEKKTFSNFWIKLMNFSKSKFRYELLSPSERKNDSTGSSPIIMCIQPFSPNSQSKNNNNNKNHHSDDIIDDDDDDDDDKTYPSLVIPFSASSPTLNINSENKNNNNVNEDKTSDTSSNSNNNNNNNNNNNNNNNNNNNNNNNNNNSNNNNNNNNLRQNQFLGNDLNKSQDNNQLMDGSGGRRDRSRSKSRSRSASPSNNHLHDKSLMGLLSSSQTSEIGDNNTNNNSDNEVDNNNNNNNNNNNNNNNNNNNNNNNNNNNNNNNNNNNNNNNNIDNNNNNKDNNNILSSENNNNTTVIEQQQQQQNVTNNNSNEPKNSNNEPKNSNITNNIVNPNVFTTTTTTTTTTRTTTTTVYDGTGTLNNLLFKINDGGIISSDSSNSLSDPESEEYSMPIKRSSSIRSPGPVSAISPLFKSLSPNLSPIVPNIINGYSFENTSACD.

The Phorbol-ester/DAG-type zinc finger occupies 12–67; the sequence is NHRFEPYTLKHLTICKRCEKEIIGVSNSAQICYSCKNIYHTRCCKEIETKKLELIC. Disordered stretches follow at residues 262 to 316, 333 to 402, and 463 to 485; these read PFNE…LNES, SNNS…KSSK, and DNNN…NNNN. Residues 271-282 are compositionally biased toward polar residues; the sequence is DSTLSASTYNRR. Composition is skewed to low complexity over residues 286–316, 333–342, and 350–361; these read KNKN…LNES, SNNSNNLAAL, and TTTTTTTTTTTT. 2 stretches are compositionally biased toward basic residues: residues 366–382 and 389–402; these read NNHH…KSRK and NKKK…KSSK. Residues 464 to 485 show a composition bias toward low complexity; sequence NNNNNNNNNNNNNNNSNNNNNN. The Protein kinase domain occupies 599–854; it reads VKINVEIYDS…EILKVFYSLL (256 aa). ATP contacts are provided by residues 605-613 and K626; that span reads IYDSPLCTV. D724 serves as the catalytic Proton acceptor. Disordered regions lie at residues 937–1241 and 1282–1310; these read SERK…IVNP and SSDS…IRSP. Residues 976–986 are compositionally biased toward acidic residues; it reads IIDDDDDDDDD. Composition is skewed to low complexity over residues 1004–1015 and 1024–1062; these read NINSENKNNNNV and SSNS…NNNN. Composition is skewed to polar residues over residues 1063 to 1083 and 1118 to 1127; these read LRQN…NQLM and LSSSQTSEIG. 2 stretches are compositionally biased toward low complexity: residues 1128–1241 and 1282–1291; these read DNNT…IVNP and SSDSSNSLSD.

It belongs to the protein kinase superfamily. TKL Ser/Thr protein kinase family.

The enzyme catalyses L-seryl-[protein] + ATP = O-phospho-L-seryl-[protein] + ADP + H(+). It carries out the reaction L-threonyl-[protein] + ATP = O-phospho-L-threonyl-[protein] + ADP + H(+). The protein is Probable serine/threonine-protein kinase DDB_G0288147 of Dictyostelium discoideum (Social amoeba).